Consider the following 350-residue polypeptide: Protein RecA (350 aa).

68–75 (GPESSGKT) provides a ligand contact to ATP.

It belongs to the RecA family.

It localises to the cytoplasm. In terms of biological role, can catalyze the hydrolysis of ATP in the presence of single-stranded DNA, the ATP-dependent uptake of single-stranded DNA by duplex DNA, and the ATP-dependent hybridization of homologous single-stranded DNAs. It interacts with LexA causing its activation and leading to its autocatalytic cleavage. This chain is Protein RecA, found in Symbiobacterium thermophilum (strain DSM 24528 / JCM 14929 / IAM 14863 / T).